The chain runs to 73 residues: Translational regulator CsrA (73 aa).

This sequence belongs to the CsrA/RsmA family. In terms of assembly, homodimer; the beta-strands of each monomer intercalate to form a hydrophobic core, while the alpha-helices form wings that extend away from the core.

The protein localises to the cytoplasm. In terms of biological role, a translational regulator that binds mRNA to regulate translation initiation and/or mRNA stability. Usually binds in the 5'-UTR at or near the Shine-Dalgarno sequence preventing ribosome-binding, thus repressing translation. Its main target seems to be the major flagellin gene, while its function is anatagonized by FliW. This chain is Translational regulator CsrA, found in Lachnospira eligens (strain ATCC 27750 / DSM 3376 / VPI C15-48 / C15-B4) (Eubacterium eligens).